Reading from the N-terminus, the 86-residue chain is AFAGVLADADIKAALAGCAAADSFNYKTFFKACGLSPEEVKKFFAIIDQDHSGFIEEEELKLFLQTFSAGARALSDAETKVALVKA.

At Ala-1 the chain carries N-acetylalanine. Positions 35 to 70 (LSPEEVKKFFAIIDQDHSGFIEEEELKLFLQTFSAG) constitute an EF-hand domain. Positions 48, 50, 52, 54, 56, and 59 each coordinate Ca(2+).

This sequence belongs to the parvalbumin family.

In terms of biological role, in muscle, parvalbumin is thought to be involved in relaxation after contraction. It binds two calcium ions. This is Parvalbumin beta 3 from Merluccius hubbsi (Argentine hake).